The following is a 216-amino-acid chain: Adenylate kinase (216 aa).

Residue 10-15 (GAGKGT) participates in ATP binding. The interval 30–59 (STGDIFRKNISENTPLGIEAKSYMDNGQLV) is NMP. Residues Thr-31, Arg-36, 57–59 (QLV), 85–88 (GFPR), and Gln-92 contribute to the AMP site. The LID stretch occupies residues 126-163 (GRRVCPSCGASYHIKFNPPTNDGKCDLCGSDVIQRKDD). Arg-127 serves as a coordination point for ATP. Zn(2+)-binding residues include Cys-130 and Cys-133. Residue 136 to 137 (SY) coordinates ATP. Residues Cys-150 and Cys-153 each coordinate Zn(2+). Positions 160 and 171 each coordinate AMP. Gln-199 contributes to the ATP binding site.

Belongs to the adenylate kinase family. As to quaternary structure, monomer.

The protein localises to the cytoplasm. The enzyme catalyses AMP + ATP = 2 ADP. The protein operates within purine metabolism; AMP biosynthesis via salvage pathway; AMP from ADP: step 1/1. In terms of biological role, catalyzes the reversible transfer of the terminal phosphate group between ATP and AMP. Plays an important role in cellular energy homeostasis and in adenine nucleotide metabolism. In Clostridium perfringens (strain ATCC 13124 / DSM 756 / JCM 1290 / NCIMB 6125 / NCTC 8237 / Type A), this protein is Adenylate kinase.